We begin with the raw amino-acid sequence, 608 residues long: Lysophospholipase 2 (608 aa).

Residues 1–17 (MLVWQSILLFLVGCVLS) form the signal peptide. The PLA2c domain maps to 30 to 564 (QCPEGKLTRS…ENYCWDGTIY (535 aa)). Residues Asn-259, Asn-365, Asn-450, Asn-464, Asn-491, and Asn-572 are each glycosylated (N-linked (GlcNAc...) asparagine).

Belongs to the lysophospholipase family.

The protein localises to the secreted. It carries out the reaction a 1-acyl-sn-glycero-3-phosphocholine + H2O = sn-glycerol 3-phosphocholine + a fatty acid + H(+). Catalyzes the release of fatty acids from lysophospholipids. Phospholipase B may well contribute to pathogenicity by abetting the fungus in damaging and traversing host cell membranes, processes which likely increase the rapidity of disseminated infection. The protein is Lysophospholipase 2 (PLB2) of Candida albicans (Yeast).